The following is an 80-amino-acid chain: uncharacterized protein (80 aa).

This is an uncharacterized protein from Acidianus sp. F28 (AFV-2).